Consider the following 130-residue polypeptide: Small ribosomal subunit protein uS11 (130 aa).

This sequence belongs to the universal ribosomal protein uS11 family. In terms of assembly, part of the 30S ribosomal subunit. Interacts with proteins S7 and S18. Binds to IF-3.

In terms of biological role, located on the platform of the 30S subunit, it bridges several disparate RNA helices of the 16S rRNA. Forms part of the Shine-Dalgarno cleft in the 70S ribosome. This chain is Small ribosomal subunit protein uS11, found in Parasynechococcus marenigrum (strain WH8102).